A 421-amino-acid chain; its full sequence is Diaminobutyrate--2-oxoglutarate transaminase (421 aa).

At Lys-262 the chain carries N6-(pyridoxal phosphate)lysine.

Belongs to the class-III pyridoxal-phosphate-dependent aminotransferase family. Pyridoxal 5'-phosphate serves as cofactor.

It carries out the reaction L-2,4-diaminobutanoate + 2-oxoglutarate = L-aspartate 4-semialdehyde + L-glutamate. The protein operates within amine and polyamine biosynthesis; ectoine biosynthesis; L-ectoine from L-aspartate 4-semialdehyde: step 1/3. Its function is as follows. Catalyzes reversively the conversion of L-aspartate beta-semialdehyde (ASA) to L-2,4-diaminobutyrate (DABA) by transamination with L-glutamate. This chain is Diaminobutyrate--2-oxoglutarate transaminase (ectB), found in Vibrio parahaemolyticus serotype O3:K6 (strain RIMD 2210633).